Consider the following 656-residue polypeptide: Methionine--tRNA ligase (656 aa).

Residues tyrosine 11–histidine 21 carry the 'HIGH' region motif. Positions 126, 129, 147, and 150 each coordinate Zn(2+). Residues lysine 301–serine 305 carry the 'KMSKS' region motif. Lysine 304 contacts ATP. The tRNA-binding domain maps to aspartate 555–serine 656.

The protein belongs to the class-I aminoacyl-tRNA synthetase family. MetG type 2A subfamily. Homodimer. The cofactor is Zn(2+).

It localises to the cytoplasm. The enzyme catalyses tRNA(Met) + L-methionine + ATP = L-methionyl-tRNA(Met) + AMP + diphosphate. Is required not only for elongation of protein synthesis but also for the initiation of all mRNA translation through initiator tRNA(fMet) aminoacylation. This is Methionine--tRNA ligase (metG) from Helicobacter pylori (strain J99 / ATCC 700824) (Campylobacter pylori J99).